A 427-amino-acid polypeptide reads, in one-letter code: Histidinol dehydrogenase (427 aa).

Substrate is bound by residues S232, Q254, and H257. Zn(2+)-binding residues include Q254 and H257. Active-site proton acceptor residues include E322 and H323. The substrate site is built by H323, D356, E410, and H415. Residue D356 participates in Zn(2+) binding. H415 contacts Zn(2+).

Belongs to the histidinol dehydrogenase family. Zn(2+) is required as a cofactor.

The enzyme catalyses L-histidinol + 2 NAD(+) + H2O = L-histidine + 2 NADH + 3 H(+). It participates in amino-acid biosynthesis; L-histidine biosynthesis; L-histidine from 5-phospho-alpha-D-ribose 1-diphosphate: step 9/9. Catalyzes the sequential NAD-dependent oxidations of L-histidinol to L-histidinaldehyde and then to L-histidine. This Listeria monocytogenes serovar 1/2a (strain ATCC BAA-679 / EGD-e) protein is Histidinol dehydrogenase.